Consider the following 396-residue polypeptide: Ornithine aminotransferase (396 aa).

Position 255 is an N6-(pyridoxal phosphate)lysine (K255).

It belongs to the class-III pyridoxal-phosphate-dependent aminotransferase family. OAT subfamily. Pyridoxal 5'-phosphate serves as cofactor.

The protein localises to the cytoplasm. It carries out the reaction a 2-oxocarboxylate + L-ornithine = L-glutamate 5-semialdehyde + an L-alpha-amino acid. It functions in the pathway amino-acid biosynthesis; L-proline biosynthesis; L-glutamate 5-semialdehyde from L-ornithine: step 1/1. Functionally, catalyzes the interconversion of ornithine to glutamate semialdehyde. The chain is Ornithine aminotransferase from Staphylococcus epidermidis (strain ATCC 35984 / DSM 28319 / BCRC 17069 / CCUG 31568 / BM 3577 / RP62A).